A 137-amino-acid chain; its full sequence is Large ribosomal subunit protein uL22 (137 aa).

The protein belongs to the universal ribosomal protein uL22 family. In terms of assembly, part of the 50S ribosomal subunit.

Its function is as follows. This protein binds specifically to 23S rRNA; its binding is stimulated by other ribosomal proteins, e.g. L4, L17, and L20. It is important during the early stages of 50S assembly. It makes multiple contacts with different domains of the 23S rRNA in the assembled 50S subunit and ribosome. In terms of biological role, the globular domain of the protein is located near the polypeptide exit tunnel on the outside of the subunit, while an extended beta-hairpin is found that lines the wall of the exit tunnel in the center of the 70S ribosome. The sequence is that of Large ribosomal subunit protein uL22 from Flavobacterium johnsoniae (strain ATCC 17061 / DSM 2064 / JCM 8514 / BCRC 14874 / CCUG 350202 / NBRC 14942 / NCIMB 11054 / UW101) (Cytophaga johnsonae).